A 225-amino-acid chain; its full sequence is Pathogenesis-related 5 protein Jun a 3.0101 (225 aa).

The first 26 residues, 1-26 (MARVSELAFLLAATLAISLHMQEAGV), serve as a signal peptide directing secretion. 8 disulfide bridges follow: Cys35–Cys224, Cys76–Cys86, Cys91–Cys97, Cys139–Cys213, Cys144–Cys197, Cys152–Cys162, Cys166–Cys175, and Cys176–Cys184. IgE-binding stretches follow at residues 146–157 (ADINAVCPSELK), 158–170 (VDGG…NVFK), and 178–191 (NAYV…NYSK).

The protein belongs to the thaumatin family. In terms of tissue distribution, expressed in pollen (at protein level).

The sequence is that of Pathogenesis-related 5 protein Jun a 3.0101 from Juniperus ashei (Ozark white cedar).